The primary structure comprises 274 residues: Large ribosomal subunit protein uL2 (274 aa).

The tract at residues 223–258 is disordered; sequence VAMNPVDHPHGGGEGRTSGGRHPVTPWGIPTKGYKT.

Belongs to the universal ribosomal protein uL2 family. Part of the 50S ribosomal subunit. Forms a bridge to the 30S subunit in the 70S ribosome.

Its function is as follows. One of the primary rRNA binding proteins. Required for association of the 30S and 50S subunits to form the 70S ribosome, for tRNA binding and peptide bond formation. It has been suggested to have peptidyltransferase activity; this is somewhat controversial. Makes several contacts with the 16S rRNA in the 70S ribosome. The chain is Large ribosomal subunit protein uL2 from Geotalea daltonii (strain DSM 22248 / JCM 15807 / FRC-32) (Geobacter daltonii).